The sequence spans 58 residues: Mastoparan-VT7 (58 aa).

An N-terminal signal peptide occupies residues 1–27 (MKNTILILFTAFIALLGFFGMSAEALA). AXPX repeat units lie at residues 27-30 (ADPK), 31-34 (ADPL), 35-38 (AGPN), and 41-44 (ADPE). Residues 28–45 (DPKADPLAGPNPDADPEA) constitute a propeptide that is removed on maturation.

The protein belongs to the MCD family. Mastoparan subfamily. As to expression, expressed by the venom gland.

The protein resides in the secreted. The synthetic peptide shows antimicrobial activities against Gram-negative bacteria (but not against all strains tested), Gram-positive bacteria (all strains tested) and the fungi C.albicans (but not C.parapsilosis). Exhibits little hemolytic activity against washed human erythrocytes. This Vespa tropica (Greater banded hornet) protein is Mastoparan-VT7.